Reading from the N-terminus, the 280-residue chain is Ribonuclease Z (280 aa).

Zn(2+) contacts are provided by histidine 61, histidine 63, aspartate 65, histidine 66, histidine 153, aspartate 176, and histidine 240. The active-site Proton acceptor is the aspartate 65.

This sequence belongs to the RNase Z family. In terms of assembly, homodimer. Zn(2+) is required as a cofactor.

It carries out the reaction Endonucleolytic cleavage of RNA, removing extra 3' nucleotides from tRNA precursor, generating 3' termini of tRNAs. A 3'-hydroxy group is left at the tRNA terminus and a 5'-phosphoryl group is left at the trailer molecule.. Its function is as follows. Zinc phosphodiesterase, which displays some tRNA 3'-processing endonuclease activity. Probably involved in tRNA maturation, by removing a 3'-trailer from precursor tRNA. The polypeptide is Ribonuclease Z (Mycobacterium avium (strain 104)).